The chain runs to 424 residues: UPF0597 protein Sputcn32_1209 (424 aa).

It belongs to the UPF0597 family.

The protein is UPF0597 protein Sputcn32_1209 of Shewanella putrefaciens (strain CN-32 / ATCC BAA-453).